Here is a 398-residue protein sequence, read N- to C-terminus: DNA-directed RNA polymerase III subunit RPC4 (398 aa).

Residues 1 to 105 are disordered; that stretch reads MSEGNAAGEP…GRGRPEVIQS (105 aa). The residue at position 2 (S2) is an N-acetylserine. At S42 the chain carries Phosphoserine. Positions 66–100 are enriched in basic and acidic residues; sequence KIKEEPKEEVTVKKEKRERDRDRQRDSHGRGRGRP. Residues K68 and K78 each participate in a glycyl lysine isopeptide (Lys-Gly) (interchain with G-Cter in SUMO2) cross-link. Omega-N-methylarginine occurs at positions 95, 97, and 99. Glycyl lysine isopeptide (Lys-Gly) (interchain with G-Cter in SUMO2) cross-links involve residues K141, K152, K160, K190, K199, K206, K220, K285, and K302.

This sequence belongs to the eukaryotic RPC4/POLR3D RNA polymerase subunit family. Component of the RNA polymerase III complex consisting of 17 subunits: a ten-subunit horseshoe-shaped catalytic core composed of POLR3A/RPC1, POLR3B/RPC2, POLR1C/RPAC1, POLR1D/RPAC2, POLR3K/RPC10, POLR2E/RPABC1, POLR2F/RPABC2, POLR2H/RPABC3, POLR2K/RPABC4 and POLR2L/RPABC5; a mobile stalk composed of two subunits POLR3H/RPC8 and CRCP/RPC9, protruding from the core and functioning primarily in transcription initiation; and additional subunits homologous to general transcription factors of the RNA polymerase II machinery, POLR3C/RPC3-POLR3F/RPC6-POLR3G/RPC7 heterotrimer required for transcription initiation and POLR3D/RPC4-POLR3E/RPC5 heterodimer involved in both transcription initiation and termination. Sumoylation on Lys-141 can serve as a signal to mark misfolded Pol III for proteasomal degradation.

It is found in the nucleus. Functionally, DNA-dependent RNA polymerase catalyzes the transcription of DNA into RNA using the four ribonucleoside triphosphates as substrates. Specific peripheric component of RNA polymerase III (Pol III) which synthesizes small non-coding RNAs including 5S rRNA, snRNAs, tRNAs and miRNAs from at least 500 distinct genomic loci. Enables recruitment of Pol III at transcription initiation site and drives transcription initiation from both type 2 and type 3 DNA promoters. Required for efficient transcription termination and reinitiation. Pol III plays a key role in sensing and limiting infection by intracellular bacteria and DNA viruses. Acts as nuclear and cytosolic DNA sensor involved in innate immune response. Can sense non-self dsDNA that serves as template for transcription into dsRNA. The non-self RNA polymerase III transcripts, such as Epstein-Barr virus-encoded RNAs (EBERs) induce type I interferon and NF-kappa-B through the RIG-I pathway. This is DNA-directed RNA polymerase III subunit RPC4 (POLR3D) from Bos taurus (Bovine).